The primary structure comprises 224 residues: UPF0758 protein PST_0473 (224 aa).

The region spanning 102 to 224 (ALESPQAVRD…PLSMAEYGWM (123 aa)) is the MPN domain. Zn(2+) contacts are provided by His-173, His-175, and Asp-186. A JAMM motif motif is present at residues 173-186 (HNHPSGVAEPSQAD).

Belongs to the UPF0758 family.

The protein is UPF0758 protein PST_0473 of Stutzerimonas stutzeri (strain A1501) (Pseudomonas stutzeri).